The sequence spans 101 residues: Large ribosomal subunit protein P1 (101 aa).

The tract at residues 65–89 is disordered; that stretch reads AAPAAAPAEEPKEEKKEEKKEEDTT. A compositionally biased stretch (basic and acidic residues) spans 73 to 87; that stretch reads EEPKEEKKEEKKEED.

The protein belongs to the eukaryotic ribosomal protein P1/P2 family. In terms of assembly, part of the 50S ribosomal subunit. Homodimer, it forms part of the ribosomal stalk which helps the ribosome interact with GTP-bound translation factors. Forms a heptameric uL10/P0(P1)2(P1)2(P1)2 complex, where uL10/P0 forms an elongated spine to which the P1 dimers bind in a sequential fashion.

Functionally, forms part of the ribosomal stalk, playing a central role in the interaction of the ribosome with GTP-bound translation factors. The protein is Large ribosomal subunit protein P1 of Methanothermococcus thermolithotrophicus (Methanococcus thermolithotrophicus).